The chain runs to 2290 residues: MTLSTFNRVWCKVMLQRYMGAWLDNNLSVDQLSLELANGCLELDNLDINTKAVSNGFLQCNIPLKLIDGYLGKIKIEIPWLSLMTDPTRMCIEDLQLTFRGAEVMKINDIETLTSMIESVLMGLSTDDMARSVYEEVSKENNVASELLGPDDTADSFSGFIDAVYSRFCLKIKHLTLRFETDPKNRSTMATALEIRVETITFMDEQMRSCEMDHTNATDLVTTQPHGVVSTTNLRKNLTFSGVTFHTDVFSQINNDGMGDEENVLITSMHIRREKAKQMSPTKSVQNSLHPEMFQSAMSDMDAFHSCYDKLTQDYCSPDQLETLRTAPAEPELFSAPIQCAEVVGDISCVFRIKNGANDVNYADVDESKVETDVFIKGINVFATPSQIEIVNRFFSSIVTPKELVVHEQGKPMSKEDYENMTKNMEPNQSNEPPMAGASFGGNWNVGEVFREFDDLKSIKEKEKSEKEKFKSLKASGNIKEEFTVNTHIGTVLMYIPHCDYMSSDYAQQHGGYANVLNYLKKESESFFKSIQGYSFMSKHGLANIRQQSDSFYPKDHLRIVGGSLGITSSCKRVGNVDSFLCRVVATHFDMLEYLTPESAPENSTPIRIGLLDYSEQENLESDPNFKMVLSTSSEQKGLTKVDILLGAVKTELDFSIIDRISNLIACRPFFDEALTNYGNRNTVPQLKDDLYSDVLIAEDDVKSKTLVNLKCSNWQVDLRIPKADLRDPTGSRLPFSQRHVHNEFLRLGIKEIDVSIPIEKSVTLIEILCTEMIGDFCGEGLNIPKQQQRILHASKNGFDKINLKLTLCSDAKKLPGCGRKTSTSGIPDSMMKSVSADIMMAHPKKEGPFSKVPRSYCSHDGEETEEIIQAGTRKEILDFQEECQNFASTFMLFTVPVLKLHIPEKNFLEILYNRLVNDLALFQPAAPAFRNNQSTNSNVQPLESFQECVSPKNYAESEHSDLDDDVATLHESIESLNFDRDIPHTFVMTLNANKCTVLCNTAIKEAEKQPESSQVSLDLEKVHIGTTAGYHGDINHTYFHFTSSKAAAGSIDSPRAPRIPNLISAKDFGKWTKDCNQLEHVPITDELSSGSTEDAFAVALHMHFRPDVNMKDVLLGIALRNSQLQAKPFRHWGAFWITQLADLFTLQDYAIPGYELPSVSTDLHICFENAIIGYDHAWVNPNSKLKLRATLGQCNLASSIVSDMNISKTLCIFESCRLYMSNDLTKDAVRFEGYGTQKVSPKKFIPFLDLGSVQLDILFAVGDETGLRTNPTFEIRCQNDIINAWACADSLATFMKTVMEYTSHEQIPIKTPEEESQELMKSTKTDDINKSVAGESVWSDASTGSKHIQKMTVGANLPDDVEKRIQAMIQEAVNENDERDGIAIGEDAVREFATIQPKHDANETNESFEHVASRNFSVTDDEFCMVDDNIFGSGITIQPGESRTRPMPAKQLPEEPLINGSEFFQTIEDSGSDALYQTMSGQINPVLRYFLKDVTVRLSLYAGNDLSTSPSPIKTYCTEEYRNGFGPEQKIEQNSTGGPNRDHSAFVVFELSKITYLKQIFDKTAPMLSTTLFQVNDIVIKDCVRASDIKEMLYQYSVTNQPRRATAPIVTVRMSETHSKEGKMRVSMLPIKINVDQDTLEFLTDFFEETSKLLDLPKNQMSMPLIQRPVIEVPADIGSKKTTPKTSVSSSEGDIARMYPSIPSPSLTLEPLRPSPVQPPTPLGDLTYLEKISSNHQSPVKRPIIDAPLTASAVSIGKIFERDAHSDEDEEEIIDPIQMAAALEIRELNEELGRIEQLEKKKTDDLFKQSYSSSSSETESESSAPQSSQVRRLHESLDASNPTGLSDLTGDWADDHDLTYTHHDVVRQESPSFNCNISPIKGYSPPAELRPLNLMDSETERDSSASPVTSSPIKPARNIKKELPPLKMPRQPLSNDDILMRSTMMGSVHPSQSVHNLVDTSDDLEEHGNFLDSIDNEDDNEKQKIEEEMEEDEKEEEEERNKEIQEAVERGETFFKQFVFSPSVNIYVDYQGKRKITMEKAGALVGLLMAFGQLNQMPINLRKIDTRTGLLGTGRCMQHAIGEWSGDLLTNMPSVIASYGPISPLVQIGRGVVDLFLMPVAEFRKDDGNVMKGVQRGVGSFSVSSAAGIVGMAQTVTGFVQSLAEMTMKEIKPDDPSTRRVARRYNRNHGMNPTDVRHSLQLAYGILYDGYHQTRDDLELAAQEDRASGNSVVRSAFRYAVPTFLGPIVMATQVTYQLLGGLRNQLRPDTYQDERRKWGEKDVPGGVNK.

The Chorein N-terminal domain maps to 10–99 (WCKVMLQRYM…MCIEDLQLTF (90 aa)). A required for epg-6 binding region spans residues 829–1549 (DSMMKSVSAD…PNRDHSAFVV (721 aa)). Disordered regions lie at residues 1678–1727 (IGSK…LGDL), 1805–1851 (DDLF…DLTG), 1898–1919 (SETE…PARN), and 1967–2003 (EHGN…ERNK). A compositionally biased stretch (low complexity) spans 1681–1692 (KKTTPKTSVSSS). A compositionally biased stretch (pro residues) spans 1714-1723 (RPSPVQPPTP). Residues 1810–1830 (QSYSSSSSETESESSAPQSSQ) are compositionally biased toward low complexity. A coiled-coil region spans residues 1972–2011 (LDSIDNEDDNEKQKIEEEMEEDEKEEEEERNKEIQEAVER). The segment covering 1988-1999 (EEMEEDEKEEEE) has biased composition (acidic residues).

This sequence belongs to the ATG2 family. In terms of assembly, interacts with epg-6; the interaction is direct.

The protein localises to the preautophagosomal structure membrane. It is found in the lipid droplet. The protein resides in the endoplasmic reticulum membrane. Its subcellular location is the cytoplasm. The enzyme catalyses a 1,2-diacyl-sn-glycero-3-phospho-L-serine(in) = a 1,2-diacyl-sn-glycero-3-phospho-L-serine(out). It catalyses the reaction a 1,2-diacyl-sn-glycero-3-phosphoethanolamine(in) = a 1,2-diacyl-sn-glycero-3-phosphoethanolamine(out). In terms of biological role, lipid transfer protein involved in autophagosome assembly and in the distribution of atg-9 and atg-13 during the autophagy-mediated degradation of protein aggregates. Tethers the edge of the isolation membrane (IM) to the endoplasmic reticulum (ER) and mediates direct lipid transfer from ER to IM for IM expansion. Binds to the ER exit site (ERES), which is the membrane source for autophagosome formation, and extracts phospholipids from the membrane source to the IM for membrane expansion. Involved in autophagy-mediated degradation of ribosomal RNA and ribosomal proteins in lysosomes, which is essential for maintaining nucleotide homeostasis. In Caenorhabditis elegans, this protein is Autophagy-related protein 2.